The following is a 322-amino-acid chain: HPr kinase/phosphorylase (322 aa).

Catalysis depends on residues H146 and K167. 161–168 (GDSGLGKS) is a binding site for ATP. S168 contacts Mg(2+). The active-site Proton acceptor; for phosphorylation activity. Proton donor; for dephosphorylation activity is D185. The interval 209–218 (LEVRGLGLLD) is important for the catalytic mechanism of both phosphorylation and dephosphorylation. E210 is a binding site for Mg(2+). R250 is an active-site residue. The tract at residues 271–276 (QVAAGR) is important for the catalytic mechanism of dephosphorylation.

Belongs to the HPrK/P family. In terms of assembly, homohexamer. Mg(2+) serves as cofactor.

The catalysed reaction is [HPr protein]-L-serine + ATP = [HPr protein]-O-phospho-L-serine + ADP + H(+). It carries out the reaction [HPr protein]-O-phospho-L-serine + phosphate + H(+) = [HPr protein]-L-serine + diphosphate. Catalyzes the ATP- as well as the pyrophosphate-dependent phosphorylation of a specific serine residue in HPr, a phosphocarrier protein of the phosphoenolpyruvate-dependent sugar phosphotransferase system (PTS). HprK/P also catalyzes the pyrophosphate-producing, inorganic phosphate-dependent dephosphorylation (phosphorolysis) of seryl-phosphorylated HPr (P-Ser-HPr). The sequence is that of HPr kinase/phosphorylase from Paraburkholderia phytofirmans (strain DSM 17436 / LMG 22146 / PsJN) (Burkholderia phytofirmans).